Consider the following 419-residue polypeptide: Ubiquitin-like modifier-activating enzyme 5 (419 aa).

The tract at residues 18 to 47 is disordered; it reads NRLGNVKKDHPLESSSNSKPTHQPKSPAPY. Residues 30-41 show a composition bias toward polar residues; that stretch reads ESSSNSKPTHQP. Gly-94, Asp-115, Lys-138, Asn-161, and Asn-194 together coordinate ATP. Cys-236 and Cys-239 together coordinate Zn(2+). The active-site Glycyl thioester intermediate is the Cys-260. The Zn(2+) site is built by Cys-313 and Cys-318.

Belongs to the ubiquitin-activating E1 family. UBA5 subfamily. Interacts with ufc-1. Expressed in the intestine.

E1-like enzyme which activates ufm-1. Required for interaction between ufm-1 and ufc-1. The protein is Ubiquitin-like modifier-activating enzyme 5 of Caenorhabditis elegans.